We begin with the raw amino-acid sequence, 354 residues long: Uroporphyrinogen decarboxylase (354 aa).

Residues 27-31 (RQAGR), Asp-77, Tyr-153, Thr-208, and His-326 each bind substrate.

This sequence belongs to the uroporphyrinogen decarboxylase family. In terms of assembly, homodimer.

It localises to the cytoplasm. The enzyme catalyses uroporphyrinogen III + 4 H(+) = coproporphyrinogen III + 4 CO2. Its pathway is porphyrin-containing compound metabolism; protoporphyrin-IX biosynthesis; coproporphyrinogen-III from 5-aminolevulinate: step 4/4. Catalyzes the decarboxylation of four acetate groups of uroporphyrinogen-III to yield coproporphyrinogen-III. The sequence is that of Uroporphyrinogen decarboxylase from Neisseria meningitidis serogroup C (strain 053442).